Here is a 247-residue protein sequence, read N- to C-terminus: Probable transcriptional regulatory protein GAU_0635 (247 aa).

The protein belongs to the TACO1 family.

The protein localises to the cytoplasm. The chain is Probable transcriptional regulatory protein GAU_0635 from Gemmatimonas aurantiaca (strain DSM 14586 / JCM 11422 / NBRC 100505 / T-27).